Here is a 275-residue protein sequence, read N- to C-terminus: tRNA pseudouridine synthase A (275 aa).

Catalysis depends on Asp-55, which acts as the Nucleophile. Tyr-111 is a binding site for substrate.

It belongs to the tRNA pseudouridine synthase TruA family.

The enzyme catalyses uridine(38/39/40) in tRNA = pseudouridine(38/39/40) in tRNA. Formation of pseudouridine at positions 38, 39 and 40 in the anticodon stem and loop of transfer RNAs. The chain is tRNA pseudouridine synthase A from Methanococcoides burtonii (strain DSM 6242 / NBRC 107633 / OCM 468 / ACE-M).